Consider the following 468-residue polypeptide: uncharacterized protein (468 aa).

In terms of domain architecture, HTH gntR-type spans 1–69 (MKKYQQLAEQ…PQSGYYVAPQ (69 aa)). An N6-(pyridoxal phosphate)lysine modification is found at Lys312.

This sequence in the C-terminal section; belongs to the class-I pyridoxal-phosphate-dependent aminotransferase family.

This is an uncharacterized protein from Escherichia coli (strain K12).